A 251-amino-acid polypeptide reads, in one-letter code: PF03932 family protein CutC (251 aa).

The protein belongs to the CutC family.

Its subcellular location is the cytoplasm. In Edwardsiella ictaluri (strain 93-146), this protein is PF03932 family protein CutC.